Reading from the N-terminus, the 433-residue chain is 4-hydroxy-3-methylbut-2-en-1-yl diphosphate synthase (flavodoxin) (433 aa).

Cys-320, Cys-323, Cys-366, and Glu-373 together coordinate [4Fe-4S] cluster.

It belongs to the IspG family. [4Fe-4S] cluster serves as cofactor.

The catalysed reaction is (2E)-4-hydroxy-3-methylbut-2-enyl diphosphate + oxidized [flavodoxin] + H2O + 2 H(+) = 2-C-methyl-D-erythritol 2,4-cyclic diphosphate + reduced [flavodoxin]. It participates in isoprenoid biosynthesis; isopentenyl diphosphate biosynthesis via DXP pathway; isopentenyl diphosphate from 1-deoxy-D-xylulose 5-phosphate: step 5/6. Its function is as follows. Converts 2C-methyl-D-erythritol 2,4-cyclodiphosphate (ME-2,4cPP) into 1-hydroxy-2-methyl-2-(E)-butenyl 4-diphosphate. The polypeptide is 4-hydroxy-3-methylbut-2-en-1-yl diphosphate synthase (flavodoxin) (Beijerinckia indica subsp. indica (strain ATCC 9039 / DSM 1715 / NCIMB 8712)).